The chain runs to 219 residues: Vesicle-associated membrane protein 711 (219 aa).

The residue at position 2 (alanine 2) is an N-acetylalanine. Topologically, residues 2–189 (AILYALVARG…RSNVWWRNCK (188 aa)) are cytoplasmic. The region spanning 7 to 111 (LVARGTVVLS…AMNEEFSRVL (105 aa)) is the Longin domain. The 61-residue stretch at 126-186 (RINRIKGEMN…RRFRSNVWWR (61 aa)) folds into the v-SNARE coiled-coil homology domain. Residues 190–210 (LTVLLILLLLVIIYIAVAFLC) form a helical; Anchor for type IV membrane protein membrane-spanning segment. At 211–219 (HGPTLPSCI) the chain is on the vesicular side.

Belongs to the synaptobrevin family. In terms of tissue distribution, expressed in flowers, leaves, stems and roots.

It localises to the vacuole membrane. Its subcellular location is the prevacuolar compartment membrane. Its function is as follows. Involved in the targeting and/or fusion of transport vesicles to their target membrane. This is Vesicle-associated membrane protein 711 from Arabidopsis thaliana (Mouse-ear cress).